The chain runs to 44 residues: Small, acid-soluble spore protein N (44 aa).

The tract at residues 1-44 (MGNPKKNSKDFVPNHIGTQSKKAGGNKGKQMQDTTGKQPIVDNG) is disordered.

Belongs to the SspN family.

It is found in the spore core. This is Small, acid-soluble spore protein N from Bacillus cytotoxicus (strain DSM 22905 / CIP 110041 / 391-98 / NVH 391-98).